Reading from the N-terminus, the 513-residue chain is Probable cytosol aminopeptidase (513 aa).

Mn(2+) contacts are provided by Lys-275 and Asp-280. Lys-287 is an active-site residue. Asp-298, Asp-357, and Glu-359 together coordinate Mn(2+). The active site involves Arg-361.

This sequence belongs to the peptidase M17 family. It depends on Mn(2+) as a cofactor.

Its subcellular location is the cytoplasm. The catalysed reaction is Release of an N-terminal amino acid, Xaa-|-Yaa-, in which Xaa is preferably Leu, but may be other amino acids including Pro although not Arg or Lys, and Yaa may be Pro. Amino acid amides and methyl esters are also readily hydrolyzed, but rates on arylamides are exceedingly low.. It catalyses the reaction Release of an N-terminal amino acid, preferentially leucine, but not glutamic or aspartic acids.. Presumably involved in the processing and regular turnover of intracellular proteins. Catalyzes the removal of unsubstituted N-terminal amino acids from various peptides. This chain is Probable cytosol aminopeptidase, found in Streptomyces avermitilis (strain ATCC 31267 / DSM 46492 / JCM 5070 / NBRC 14893 / NCIMB 12804 / NRRL 8165 / MA-4680).